An 87-amino-acid chain; its full sequence is Large ribosomal subunit protein bL31B (87 aa).

This sequence belongs to the bacterial ribosomal protein bL31 family. Type B subfamily. Part of the 50S ribosomal subunit.

This Escherichia coli O9:H4 (strain HS) protein is Large ribosomal subunit protein bL31B.